Reading from the N-terminus, the 101-residue chain is Urease subunit beta (101 aa).

Belongs to the urease beta subunit family. Heterotrimer of UreA (gamma), UreB (beta) and UreC (alpha) subunits. Three heterotrimers associate to form the active enzyme.

It is found in the cytoplasm. The catalysed reaction is urea + 2 H2O + H(+) = hydrogencarbonate + 2 NH4(+). Its pathway is nitrogen metabolism; urea degradation; CO(2) and NH(3) from urea (urease route): step 1/1. This Rhizobium meliloti (strain 1021) (Ensifer meliloti) protein is Urease subunit beta.